The chain runs to 100 residues: Urease subunit gamma (100 aa).

Belongs to the urease gamma subunit family. In terms of assembly, heterotrimer of UreA (gamma), UreB (beta) and UreC (alpha) subunits. Three heterotrimers associate to form the active enzyme.

It is found in the cytoplasm. It carries out the reaction urea + 2 H2O + H(+) = hydrogencarbonate + 2 NH4(+). The protein operates within nitrogen metabolism; urea degradation; CO(2) and NH(3) from urea (urease route): step 1/1. This is Urease subunit gamma from Acinetobacter baylyi (strain ATCC 33305 / BD413 / ADP1).